A 131-amino-acid chain; its full sequence is Snaclec bitiscetin subunit alpha (131 aa).

Disulfide bonds link cysteine 4-cysteine 15, cysteine 32-cysteine 125, and cysteine 100-cysteine 117. The C-type lectin domain maps to 11 to 126 (YKGHCYKVFK…CGEKNPFICK (116 aa)).

It belongs to the snaclec family. As to quaternary structure, heterodimer of subunits alpha and beta; disulfide-linked. In terms of tissue distribution, expressed by the venom gland.

It is found in the secreted. Snaclec that binds to von Willebrand factor (VWF) and induces its interaction with GPIbalpha (GP1BA) (via the vWF A1 domain), resulting in platelet aggregation. This is Snaclec bitiscetin subunit alpha from Bitis arietans (African puff adder).